Consider the following 212-residue polypeptide: Thiamine-phosphate synthase (212 aa).

4-amino-2-methyl-5-(diphosphooxymethyl)pyrimidine contacts are provided by residues 40-44 and asparagine 75; that span reads QFREK. The Mg(2+) site is built by aspartate 76 and aspartate 95. Serine 113 contributes to the 4-amino-2-methyl-5-(diphosphooxymethyl)pyrimidine binding site. Residue 139–141 participates in 2-[(2R,5Z)-2-carboxy-4-methylthiazol-5(2H)-ylidene]ethyl phosphate binding; the sequence is TPS. Lysine 142 serves as a coordination point for 4-amino-2-methyl-5-(diphosphooxymethyl)pyrimidine. 2-[(2R,5Z)-2-carboxy-4-methylthiazol-5(2H)-ylidene]ethyl phosphate is bound by residues glycine 171 and 191-192; that span reads IS.

Belongs to the thiamine-phosphate synthase family. The cofactor is Mg(2+).

The catalysed reaction is 2-[(2R,5Z)-2-carboxy-4-methylthiazol-5(2H)-ylidene]ethyl phosphate + 4-amino-2-methyl-5-(diphosphooxymethyl)pyrimidine + 2 H(+) = thiamine phosphate + CO2 + diphosphate. The enzyme catalyses 2-(2-carboxy-4-methylthiazol-5-yl)ethyl phosphate + 4-amino-2-methyl-5-(diphosphooxymethyl)pyrimidine + 2 H(+) = thiamine phosphate + CO2 + diphosphate. It carries out the reaction 4-methyl-5-(2-phosphooxyethyl)-thiazole + 4-amino-2-methyl-5-(diphosphooxymethyl)pyrimidine + H(+) = thiamine phosphate + diphosphate. The protein operates within cofactor biosynthesis; thiamine diphosphate biosynthesis; thiamine phosphate from 4-amino-2-methyl-5-diphosphomethylpyrimidine and 4-methyl-5-(2-phosphoethyl)-thiazole: step 1/1. Functionally, condenses 4-methyl-5-(beta-hydroxyethyl)thiazole monophosphate (THZ-P) and 2-methyl-4-amino-5-hydroxymethyl pyrimidine pyrophosphate (HMP-PP) to form thiamine monophosphate (TMP). The polypeptide is Thiamine-phosphate synthase (Staphylococcus carnosus (strain TM300)).